Here is a 314-residue protein sequence, read N- to C-terminus: Taste receptor type 2 member 42 (314 aa).

The Extracellular portion of the chain corresponds to 1–7 (MATELDK). Residues 8–28 (IFLILEIAEFIIGMLGNVFIG) traverse the membrane as a helical segment. The Cytoplasmic segment spans residues 29-50 (LVNCSEGIKNQKVFSADFILTC). The helical transmembrane segment at 51–71 (LAISTIGQLFVILFDSFLVGL) threads the bilayer. The Extracellular segment spans residues 72 to 101 (ASHLYTTYRLGKPVIMLWHMTNHLTTWLAT). A helical transmembrane segment spans residues 102–122 (CLSIFYFFKIAHFPHSLFLWL). Topologically, residues 123 to 127 (RWRMN) are cytoplasmic. The helical transmembrane segment at 128–148 (GMIVMLLILSLFLLIFDSLVL) threads the bilayer. Topologically, residues 149-187 (EIFIDISLNIIDKSNLTLYLDESKTLYDKLSILKTLLSL) are extracellular. A glycan (N-linked (GlcNAc...) asparagine) is linked at asparagine 163. Residues 188–208 (TSFIPFSLSLTSLLFFFLSLV) form a helical membrane-spanning segment. The Cytoplasmic portion of the chain corresponds to 209–238 (RHTRNLKLSSLGSRDSSTEAHRRAMKMVMS). A helical transmembrane segment spans residues 239 to 259 (FLFLFIVHFFSLQVANWIFFM). Over 260-265 (LWNNKY) the chain is Extracellular. The helical transmembrane segment at 266-286 (IKFAMLALNAFPSCHSFILIL) threads the bilayer. At 287 to 314 (GNSKLRQTAVRLLWHLRNYTKTPNALPL) the chain is on the cytoplasmic side.

The protein belongs to the G-protein coupled receptor T2R family.

Its subcellular location is the membrane. Its function is as follows. Receptor that may play a role in the perception of bitterness and is gustducin-linked. May play a role in sensing the chemical composition of the gastrointestinal content. The activity of this receptor may stimulate alpha gustducin, mediate PLC-beta-2 activation and lead to the gating of TRPM5. The chain is Taste receptor type 2 member 42 (TAS2R42) from Pan paniscus (Pygmy chimpanzee).